The following is a 255-amino-acid chain: F-box/SPRY domain-containing protein 1 (255 aa).

An F-box domain is found at 3–51 (DPVAALCNYNVLEVIFSYLELEDLNHCSQVCKSWYHFLNDENSDVWRWH). The B30.2/SPRY domain maps to 61 to 253 (LKSDLLASVS…VSMVYLGTPL (193 aa)).

The protein belongs to the FBXO45/Fsn family. Component of an E3 ubiquitin ligase complex composed of hiw and Fsn.

It localises to the synapse. Its pathway is protein modification; protein ubiquitination. In terms of biological role, required in the presynaptic motoneuron to down-regulate the levels of wnd and restrain synaptic terminal growth at the neuromuscular junction (NMJ). The chain is F-box/SPRY domain-containing protein 1 from Drosophila yakuba (Fruit fly).